A 519-amino-acid chain; its full sequence is Ribonuclease Y (519 aa).

The chain crosses the membrane as a helical span at residues 6–26 (VPFYLLIFLVGIGLGVLTFWA). In terms of domain architecture, KH spans 209 to 272 (TVCTVTIPNE…HIAKMALTEL (64 aa)). The region spanning 335–428 (VLDHSLEVSH…CSAADAISAS (94 aa)) is the HD domain.

The protein belongs to the RNase Y family.

Its subcellular location is the cell membrane. In terms of biological role, endoribonuclease that initiates mRNA decay. This chain is Ribonuclease Y, found in Protochlamydia amoebophila (strain UWE25).